Consider the following 197-residue polypeptide: Isochorismatase domain-containing protein 2 (197 aa).

This sequence belongs to the isochorismatase family.

The polypeptide is Isochorismatase domain-containing protein 2 (isoc2) (Danio rerio (Zebrafish)).